The chain runs to 292 residues: Type II methyltransferase M.SmaI (292 aa).

Residues 110 to 130 (WRDKDDKNKGRAMSYRPPTPE) form a disordered region.

Belongs to the N(4)/N(6)-methyltransferase family. N(4) subfamily.

The catalysed reaction is a 2'-deoxycytidine in DNA + S-adenosyl-L-methionine = an N(4)-methyl-2'-deoxycytidine in DNA + S-adenosyl-L-homocysteine + H(+). A beta subtype methylase thatnrecognizes the double-stranded sequence 5'-CCCGGG-3', methylates C-2 on both strands, and protects the DNA from cleavage by the SmaI endonuclease. The chain is Type II methyltransferase M.SmaI (smaIM) from Serratia marcescens.